The chain runs to 752 residues: Multifunctional tryptophan biosynthesis protein (752 aa).

The 201-residue stretch at 23-223 (NVILIDNYDS…LELTAGTWDN (201 aa)) folds into the Glutamine amidotransferase type-1 domain. 74–76 (GPG) lines the L-glutamine pocket. C102 (nucleophile; for GATase activity) is an active-site residue. Residues Q106 and 152–153 (SL) each bind L-glutamine. Active-site for GATase activity residues include H197 and E199. Residues 239–503 (ILDKIYAHRK…DTSAFVAQLL (265 aa)) are indole-3-glycerol phosphate synthase. The interval 519-752 (LVKICGTRTE…FVKSAKSIRQ (234 aa)) is N-(5'-phosphoribosyl)anthranilate isomerase.

The catalysed reaction is N-(5-phospho-beta-D-ribosyl)anthranilate = 1-(2-carboxyphenylamino)-1-deoxy-D-ribulose 5-phosphate. It carries out the reaction 1-(2-carboxyphenylamino)-1-deoxy-D-ribulose 5-phosphate + H(+) = (1S,2R)-1-C-(indol-3-yl)glycerol 3-phosphate + CO2 + H2O. It catalyses the reaction chorismate + L-glutamine = anthranilate + pyruvate + L-glutamate + H(+). It participates in amino-acid biosynthesis; L-tryptophan biosynthesis; L-tryptophan from chorismate: step 1/5. The protein operates within amino-acid biosynthesis; L-tryptophan biosynthesis; L-tryptophan from chorismate: step 3/5. It functions in the pathway amino-acid biosynthesis; L-tryptophan biosynthesis; L-tryptophan from chorismate: step 4/5. Trifunctional enzyme bearing the Gln amidotransferase (GATase) domain of anthranilate synthase, indole-glycerolphosphate synthase, and phosphoribosylanthranilate isomerase activities. This is Multifunctional tryptophan biosynthesis protein (trpC) from Penicillium chrysogenum (Penicillium notatum).